We begin with the raw amino-acid sequence, 216 residues long: Ribosomal RNA small subunit methyltransferase G (216 aa).

S-adenosyl-L-methionine is bound by residues G82, L87, 135-136 (AE), and R148.

Belongs to the methyltransferase superfamily. RNA methyltransferase RsmG family.

The protein localises to the cytoplasm. It catalyses the reaction guanosine(527) in 16S rRNA + S-adenosyl-L-methionine = N(7)-methylguanosine(527) in 16S rRNA + S-adenosyl-L-homocysteine. Specifically methylates the N7 position of guanine in position 527 of 16S rRNA. In Caulobacter vibrioides (strain ATCC 19089 / CIP 103742 / CB 15) (Caulobacter crescentus), this protein is Ribosomal RNA small subunit methyltransferase G.